The chain runs to 853 residues: MCKSLVIVESPVKAKTISKYLGKQYIVKSSVGHVRDLINNKSKNKKNIKKSNIKHNEKTALIQQMGINPYKNWKAEYHILPGKEKIISELKNIANKVHYIYLATDLDREGEAIAWHLKEVIGGNSLKFRRVVFNEITKKSIEKAFQNIGKINMNRVYSQQARRFMDRIVGYMISPLLWKKISRGLSAGRVQSAAVRLITDREYEIKNFIEREHWKISLSLLSKENKKVTMDITHYRNKTFLLNNKKEVNSTIEKIKNLSFIITDRKDKIFKKKPPAPLITSTLQQASNIDLGFSVKKTMFLAQKLYEQGYITYIRTDSYFLSNYAIEKVRSYIENFYGSDFLPKKSNIYSNQKYSQEAHEAIRPSDVQVVNIDNCDPDAKKLYKLIWNYFIASQMKSERYKSIKTTVMADVFKLQSNTKIVLFSGWTKILKKSNNVNFKFPVLDIGTTLILDKILPHQIFTKPPPRFSESSLVRELEKKGIGRPSTYATIITKIKEKGYLKIKKNKFYAAKIGEILITRLKKNFSDLVDYDFTARMEKNLDQVSDKLINWKHLLNSFFDNFSQQLEQAKKPPEEGGMELNTTVPTEIDCSLCNKKMGIKTAVTGVFLSCLGYNSEPNEKRCKNTINLISLNDLSTTKKEEKNFHLKNRCKKCNLVMDVYLINENLKIFICINNPSCNGYNLKKGIFKKSLNCSLKKIKCEKCKNDMLFKTGRFGNFFMCINDTCKNTRKILPNGEISEPKFEPIPFPDILCEKSNTWFVLREGISGIFFAANTFPKSRETRSPFVEELARFEYLLPKKLHYLASAPQRDNKGNKTIVCFNKLNKQQYIASKKEGKFTGWAAFFIDRKWCIVNK.

One can recognise a Toprim domain in the interval 3-136 (KSLVIVESPV…KFRRVVFNEI (134 aa)). 2 residues coordinate Mg(2+): Glu9 and Asp105. The Topo IA-type catalytic domain occupies 152 to 565 (NMNRVYSQQA…SFFDNFSQQL (414 aa)). The interaction with DNA stretch occupies residues 186-191 (SAGRVQ). The active-site O-(5'-phospho-DNA)-tyrosine intermediate is the Tyr313. C4-type zinc fingers lie at residues 589–621 (CSLCNKKMGIKTAVTGVFLSCLGYNSEPNEKRC), 649–676 (CKKCNLVMDVYLINENLKIFICINNPSC), and 699–724 (CEKCKNDMLFKTGRFGNFFMCINDTC).

The protein belongs to the type IA topoisomerase family. Monomer. Requires Mg(2+) as cofactor.

It carries out the reaction ATP-independent breakage of single-stranded DNA, followed by passage and rejoining.. Releases the supercoiling and torsional tension of DNA, which is introduced during the DNA replication and transcription, by transiently cleaving and rejoining one strand of the DNA duplex. Introduces a single-strand break via transesterification at a target site in duplex DNA. The scissile phosphodiester is attacked by the catalytic tyrosine of the enzyme, resulting in the formation of a DNA-(5'-phosphotyrosyl)-enzyme intermediate and the expulsion of a 3'-OH DNA strand. The free DNA strand then undergoes passage around the unbroken strand, thus removing DNA supercoils. Finally, in the religation step, the DNA 3'-OH attacks the covalent intermediate to expel the active-site tyrosine and restore the DNA phosphodiester backbone. The protein is DNA topoisomerase 1 of Buchnera aphidicola subsp. Schizaphis graminum (strain Sg).